A 122-amino-acid chain; its full sequence is Probable dihydroneopterin aldolase (122 aa).

Residues Glu-21, Tyr-54, and 73–74 each bind substrate; that span reads LE. The Proton donor/acceptor role is filled by Lys-101.

Belongs to the DHNA family.

The enzyme catalyses 7,8-dihydroneopterin = 6-hydroxymethyl-7,8-dihydropterin + glycolaldehyde. It functions in the pathway cofactor biosynthesis; tetrahydrofolate biosynthesis; 2-amino-4-hydroxy-6-hydroxymethyl-7,8-dihydropteridine diphosphate from 7,8-dihydroneopterin triphosphate: step 3/4. Catalyzes the conversion of 7,8-dihydroneopterin to 6-hydroxymethyl-7,8-dihydropterin. In Chlamydia muridarum (strain MoPn / Nigg), this protein is Probable dihydroneopterin aldolase (folB).